Here is a 229-residue protein sequence, read N- to C-terminus: Lipoprotein-releasing system ATP-binding protein LolD (229 aa).

The region spanning 6–226 is the ABC transporter domain; that stretch reads LELKSVDRHY…TLSDGRVVEL (221 aa). Residue 42–49 participates in ATP binding; the sequence is APSGTGKS.

It belongs to the ABC transporter superfamily. Lipoprotein translocase (TC 3.A.1.125) family. The complex is composed of two ATP-binding proteins (LolD) and two transmembrane proteins (LolC and LolE).

It is found in the cell inner membrane. Its function is as follows. Part of the ABC transporter complex LolCDE involved in the translocation of mature outer membrane-directed lipoproteins, from the inner membrane to the periplasmic chaperone, LolA. Responsible for the formation of the LolA-lipoprotein complex in an ATP-dependent manner. The chain is Lipoprotein-releasing system ATP-binding protein LolD from Chelativorans sp. (strain BNC1).